The chain runs to 153 residues: Peptide methionine sulfoxide reductase B6 (153 aa).

In terms of domain architecture, MsrB spans 28–149 (NEEWRTVLSP…NSVALKFSSA (122 aa)). Zn(2+)-binding residues include cysteine 67, cysteine 70, cysteine 113, and cysteine 116. A disulfide bridge links cysteine 85 with cysteine 138. Cysteine 138 (nucleophile) is an active-site residue.

Belongs to the MsrB Met sulfoxide reductase family. Zn(2+) serves as cofactor.

The protein localises to the cytoplasm. Its subcellular location is the cytosol. The enzyme catalyses L-methionyl-[protein] + [thioredoxin]-disulfide + H2O = L-methionyl-(R)-S-oxide-[protein] + [thioredoxin]-dithiol. Catalyzes the reduction of methionine sulfoxide (MetSO) to methionine in proteins. Plays a protective role against oxidative stress by restoring activity to proteins that have been inactivated by methionine oxidation. MSRB family specifically reduces the MetSO R-enantiomer. The polypeptide is Peptide methionine sulfoxide reductase B6 (MSRB6) (Arabidopsis thaliana (Mouse-ear cress)).